Consider the following 523-residue polypeptide: Spastin (523 aa).

Residues 1-41 (MLDKLSKHKTMFYERVKEIDQILFSQQQAKQTQLDNLSNNN) are Cytoplasmic-facing. An intramembrane region (helical) is located at residues 42–58 (ASGGFFSGFMKMFSPLS). 3 stretches are compositionally biased toward low complexity: residues 57–71 (LSTP…NSNT), 171–184 (QQPP…QQQP), and 193–210 (TALR…TANN). 2 disordered regions span residues 57–77 (LSTP…AISQ) and 129–218 (GISS…LDQI). Over 59-523 (TPPNSSSNNN…ESYGTFAKGI (465 aa)) the chain is Cytoplasmic.

Belongs to the AAA ATPase family. Spastin subfamily. As to quaternary structure, homohexamer. The homohexamer is stabilized by ATP-binding. The homohexamer may adopt a ring conformation through which microtubules pass prior to being severed.

Its subcellular location is the membrane. It catalyses the reaction n ATP + n H2O + a microtubule = n ADP + n phosphate + (n+1) alpha/beta tubulin heterodimers.. In terms of biological role, ATP-dependent microtubule severing protein. Stimulates microtubule minus-end depolymerization and poleward microtubule flux in the mitotic spindle. The polypeptide is Spastin (Naegleria gruberi (Amoeba)).